Here is an 89-residue protein sequence, read N- to C-terminus: UPF0237 protein CE1668 (89 aa).

The ACT domain occupies 4–78 (IMTVTGQDHT…KEQGLVIRIQ (75 aa)).

Belongs to the UPF0237 family.

The sequence is that of UPF0237 protein CE1668 from Corynebacterium efficiens (strain DSM 44549 / YS-314 / AJ 12310 / JCM 11189 / NBRC 100395).